We begin with the raw amino-acid sequence, 1943 residues long: Beta-L-arabinobiosidase (1943 aa).

A signal peptide (tat-type signal) is located at residues 1-32 (MHHSTRKRWLASIGAVAAVATLATGGAVTAQA). 2 consecutive F5/8 type C domains span residues 892 to 1049 (TNVD…AYNT) and 1142 to 1302 (SKEI…AYAI). Positions 1061–1157 (TPQVDAYVSS…HGIPSDGTVN (97 aa)) constitute a PKD domain. FIVAR domains lie at 1678–1716 (ANGL…EQVA), 1746–1790 (DAAK…AAVQ), and 1823–1864 (QAKK…VDAA). Positions 1875-1906 (TKVEQKPGSQQPGVTDTDKDDKDNKGDRVPPT) are disordered. Basic and acidic residues predominate over residues 1890 to 1902 (DTDKDDKDNKGDR). Residues 1908 to 1928 (AAVSVVAAAAVLLTAAGVTIL) form a helical membrane-spanning segment.

This sequence belongs to the glycosyl hydrolase 121 family. Predicted to be exported by the Tat system. The position of the signal peptide cleavage has not been experimentally proven.

It localises to the membrane. It catalyses the reaction 4-O-(beta-L-arabinofuranosyl-(1-&gt;2)-beta-L-arabinofuranosyl-(1-&gt;2)-beta-L-arabinofuranosyl)-(2S,4S)-4-hydroxyproline + H2O = 4-O-(beta-L-arabinofuranosyl)-(2S,4S)-4-hydroxyproline + beta-L-arabinofuranosyl-(1-&gt;2)-beta-L-arabinofuranose. Functionally, beta-L-arabinobiosidase that removes L-arabinofuranose-beta-1,2-L-arabinofuranose disaccharide from various substrates such as carrot extensin and potato lectin. Also acts on L-arabinofuranose (Ara)-beta-1,2-Ara-beta-1,2-Ara-beta-Hyp (Ara(3)-Hyp) but not on Ara-beta-1,3-Ara-beta-1,2-Ara-beta-1,2-Ara-beta--Hyp (Ara(4)-Hyp) or Ara-beta-1,2-Ara-beta-Hyp (Ara(2)-Hyp), suggesting a specificity for unmodified Ara(3)-Hyp substrate. In the presence of 1-alkanols, shows transglycosylation activity, retaining the anomeric configuration of the arabinofuranose residue. This chain is Beta-L-arabinobiosidase (hypBA2), found in Bifidobacterium longum subsp. longum (strain ATCC 15707 / DSM 20219 / JCM 1217 / NCTC 11818 / E194b).